The chain runs to 394 residues: MWGSQHRSFQVALWFLVLAVFLLVGFLHVDFRLLIPDKVQEPPVTNIMFLKTHKTASSTILNILYRFSESHNLSTALPEGSRVHLGYPWFFVTRYVEGLKQDAHLQHHFNIMCNHLRFNYPEVQKVMPRDTFYFSILRNPVFQLESSFIYYKDYAPAFQRAKSLDEFLADPWKYYNASVSLKNVYAKNNMWFDFGFDNNAPADMDYVRKRLAEVEQRFHLVLIADYFDESMVLLRRRLRWQLDDVVSFKLNVRSQSTVSHLTPESQERVQHWCALDWQLYQHFNRTFWTQLHAELSPRQLTEEVEQLRERQRELMALCLQDPEPKNLTHIDDQNLRPYQGGKANILGYNLRHGLDTTTLHICQRMAMPELQHMAHMYSLQFPDKTPKDIPFLKK.

Over 1–8 (MWGSQHRS) the chain is Cytoplasmic. A helical; Signal-anchor for type II membrane protein membrane pass occupies residues 9–29 (FQVALWFLVLAVFLLVGFLHV). Residues 30–394 (DFRLLIPDKV…TPKDIPFLKK (365 aa)) are Lumenal-facing. Asn72, Asn176, Asn284, and Asn326 each carry an N-linked (GlcNAc...) asparagine glycan.

The protein belongs to the galactose-3-O-sulfotransferase family.

It is found in the golgi apparatus. It localises to the golgi stack membrane. It functions in the pathway protein modification; carbohydrate sulfation. With respect to regulation, strongly inhibited by Cu(2+) and Zn(2+). Transfers a sulfate group to the hydroxyl group at C3 of non-reducing beta-galactosyl residues. Acts both on type 1 (Gal-beta-1,3-GlcNAc) and type 2 (Gal-beta-1,4-GlcNAc) chains with similar efficiency. This chain is Galactose-3-O-sulfotransferase 2 (Gal3st2), found in Mus musculus (Mouse).